The primary structure comprises 61 residues: Large ribosomal subunit protein bL28 (61 aa).

The segment at methionine 1–threonine 24 is disordered. The segment covering lysine 9–proline 23 has biased composition (polar residues).

It belongs to the bacterial ribosomal protein bL28 family.

The polypeptide is Large ribosomal subunit protein bL28 (Lactobacillus acidophilus (strain ATCC 700396 / NCK56 / N2 / NCFM)).